Consider the following 164-residue polypeptide: Putative histone H2B type 2-D (164 aa).

Low complexity predominate over residues 1 to 12 (MPEPAKFAPAPK). The tract at residues 1-33 (MPEPAKFAPAPKKGSKKAVTKAQKKDGKKRKRS) is disordered. P2 is subject to N-acetylproline. K6 bears the N6-(2-hydroxyisobutyryl)lysine; alternate mark. An N6-(beta-hydroxybutyryl)lysine; alternate mark is found at K6 and K12. An N6-acetyllysine; alternate mark is found at K6, K12, and K13. K6 carries the N6-butyryllysine; alternate modification. Residues K6, K12, and K13 each carry the N6-crotonyllysine; alternate modification. Residues K6 and K12 each carry the N6-lactoyllysine; alternate modification. K6 is covalently cross-linked (Glycyl lysine isopeptide (Lys-Gly) (interchain with G-Cter in SUMO2); alternate). Position 13 is an N6-(2-hydroxyisobutyryl)lysine; alternate (K13). S15 is modified (phosphoserine; by STK4/MST1). N6-acetyllysine; alternate occurs at positions 16, 17, 21, and 24. N6-crotonyllysine; alternate occurs at positions 16, 17, 21, and 24. N6-lactoyllysine; alternate is present on residues K16, K17, K21, and K24. K17 and K21 each carry N6-(beta-hydroxybutyryl)lysine; alternate. K17 carries the post-translational modification N6-glutaryllysine; alternate. An N6-(2-hydroxyisobutyryl)lysine; alternate mark is found at K21 and K24. At K21 the chain carries N6-butyryllysine; alternate. A Glycyl lysine isopeptide (Lys-Gly) (interchain with G-Cter in SUMO2); alternate cross-link involves residue K21. K25 bears the N6-(2-hydroxyisobutyryl)lysine mark. Position 35 is an N6-(2-hydroxyisobutyryl)lysine; alternate (K35). K35 carries the N6-(beta-hydroxybutyryl)lysine; alternate modification. N6-crotonyllysine; alternate is present on K35. N6-glutaryllysine; alternate is present on K35. The residue at position 35 (K35) is an N6-succinyllysine; alternate. A Glycyl lysine isopeptide (Lys-Gly) (interchain with G-Cter in ubiquitin); alternate cross-link involves residue K35. Phosphoserine; by AMPK is present on S37. N6-(2-hydroxyisobutyryl)lysine; alternate is present on residues K44, K47, and K58. K44 is subject to N6-lactoyllysine; alternate. Residues K44 and K47 each carry the N6-glutaryllysine; alternate modification. The residue at position 47 (K47) is an N6-methyllysine; alternate. K58 carries the post-translational modification N6,N6-dimethyllysine; alternate. The residue at position 80 (R80) is a Dimethylated arginine. K86 carries the post-translational modification N6-(2-hydroxyisobutyryl)lysine; alternate. Position 86 is an N6-(beta-hydroxybutyryl)lysine; alternate (K86). At K86 the chain carries N6-acetyllysine; alternate. K86 carries the post-translational modification N6-lactoyllysine; alternate. K86 carries the N6,N6,N6-trimethyllysine; alternate modification. Omega-N-methylarginine occurs at positions 87 and 93. The tract at residues 111 to 140 (PCPRAPRRSPSTPAPSESLPGPGARSLPPS) is disordered.

It belongs to the histone H2B family. In terms of assembly, the nucleosome is a histone octamer containing two molecules each of H2A, H2B, H3 and H4 assembled in one H3-H4 heterotetramer and two H2A-H2B heterodimers. The octamer wraps approximately 147 bp of DNA. Post-translationally, phosphorylation at Ser-37 (H2BS36ph) by AMPK in response to stress promotes transcription. Phosphorylated on Ser-15 (H2BS14ph) by STK4/MST1 during apoptosis; which facilitates apoptotic chromatin condensation. Also phosphorylated on Ser-15 in response to DNA double strand breaks (DSBs), and in correlation with somatic hypermutation and immunoglobulin class-switch recombination. Crotonylation (Kcr) is specifically present in male germ cells and marks testis-specific genes in post-meiotic cells, including X-linked genes that escape sex chromosome inactivation in haploid cells. Crotonylation marks active promoters and enhancers and confers resistance to transcriptional repressors. It is also associated with post-meiotically activated genes on autosomes. In terms of processing, lactylated in macrophages by EP300/P300 by using lactoyl-CoA directly derived from endogenous or exogenous lactate, leading to stimulates gene transcription.

It is found in the nucleus. It localises to the chromosome. Its function is as follows. Core component of nucleosome. Nucleosomes wrap and compact DNA into chromatin, limiting DNA accessibility to the cellular machineries which require DNA as a template. Histones thereby play a central role in transcription regulation, DNA repair, DNA replication and chromosomal stability. DNA accessibility is regulated via a complex set of post-translational modifications of histones, also called histone code, and nucleosome remodeling. The protein is Putative histone H2B type 2-D of Homo sapiens (Human).